The chain runs to 107 residues: U1-lycotoxin-Ls1b (107 aa).

An N-terminal signal peptide occupies residues 1 to 20; the sequence is MMKALVVVALLVTLISYSSS. A propeptide spanning residues 21–41 is cleaved from the precursor; sequence EGIDDLEADELLSLMANEQTR. 4 disulfides stabilise this stretch: Cys44/Cys59, Cys51/Cys68, Cys58/Cys86, and Cys70/Cys84.

Belongs to the neurotoxin 19 (CSTX) family. 04 (U1-Lctx) subfamily. In terms of tissue distribution, expressed by the venom gland.

The protein localises to the secreted. The sequence is that of U1-lycotoxin-Ls1b from Lycosa singoriensis (Wolf spider).